The sequence spans 432 residues: tRNA modification GTPase MnmE (432 aa).

3 residues coordinate (6S)-5-formyl-5,6,7,8-tetrahydrofolate: R23, E85, and K124. Residues 217–362 (GARLALIGAP…LKEAVREALL (146 aa)) enclose the TrmE-type G domain. N227 provides a ligand contact to K(+). Residues 227–232 (NAGKSS), 246–252 (SPIPGTT), and 271–274 (DTAG) contribute to the GTP site. S231 contacts Mg(2+). The K(+) site is built by S246, I248, and T251. T252 provides a ligand contact to Mg(2+). Residue K432 participates in (6S)-5-formyl-5,6,7,8-tetrahydrofolate binding.

The protein belongs to the TRAFAC class TrmE-Era-EngA-EngB-Septin-like GTPase superfamily. TrmE GTPase family. In terms of assembly, homodimer. Heterotetramer of two MnmE and two MnmG subunits. K(+) is required as a cofactor.

The protein localises to the cytoplasm. In terms of biological role, exhibits a very high intrinsic GTPase hydrolysis rate. Involved in the addition of a carboxymethylaminomethyl (cmnm) group at the wobble position (U34) of certain tRNAs, forming tRNA-cmnm(5)s(2)U34. The chain is tRNA modification GTPase MnmE from Thermus thermophilus (strain ATCC 27634 / DSM 579 / HB8).